The chain runs to 551 residues: Protein GPR107 (551 aa).

The first 33 residues, 1–33, serve as a signal peptide directing secretion; that stretch reads MAVRVPLGCTGSFCPRLLPLLALLELLVDPSLG. Residues 34 to 262 lie on the Extracellular side of the membrane; it reads RVHHLALKDD…YLSAGEIPLP (229 aa). Asparagine 64 is a glycosylation site (N-linked (GlcNAc...) asparagine). Residues 127 to 183 are disordered; that stretch reads GVKVRSPPEAGKQLPEIVFSKDEKVPSRSQEPAVSSNPKDSKVQRTPDGSKAQRSTV. Polar residues predominate over residues 153–164; it reads SRSQEPAVSSNP. An N-linked (GlcNAc...) asparagine glycan is attached at asparagine 209. A helical transmembrane segment spans residues 263–283; the sequence is KLYVSMALLFFLSGTVWIHIL. At 284–292 the chain is on the cytoplasmic side; the sequence is RKRRNDVFK. A helical transmembrane segment spans residues 293–313; sequence IHWLMAALPFTKSLSLVFHAI. Topologically, residues 314-336 are extracellular; it reads DYHYISSQGFPIEGWAVVYYITH. The helical transmembrane segment at 337–357 threads the bilayer; the sequence is LLKGALLFITIALIGTGWAFI. At 358–367 the chain is on the cytoplasmic side; that stretch reads KHILSDKDKK. Residues 368 to 388 form a helical membrane-spanning segment; sequence IFMIVIPLQVLANVAYIIIES. The Extracellular segment spans residues 389–401; it reads TEEGTTEYGLWKD. Residues 402 to 422 form a helical membrane-spanning segment; sequence SLFLVDLLCCGAILFPVVWSI. Over 423-443 the chain is Cytoplasmic; that stretch reads RHLQEASATDGKAAINLAKLK. A helical membrane pass occupies residues 444-466; it reads LFRHYYVLIVCYIYFTRIIAFLL. At 467-475 the chain is on the extracellular side; sequence KFAVPFQWK. Residues 476-495 form a helical membrane-spanning segment; it reads WLYQLLDETATLVFFVLTGY. The Cytoplasmic segment spans residues 496 to 551; that stretch reads KFRPASDNPYLQLSQEEDDLEMESVVTTSGVMENMKKVKKVSNGAVEPQGSWEGTA.

Belongs to the LU7TM family. Cleaved by FURIN to yield two fragments that remain associated via a disulfide bond. Widely expressed. Not detected in the duodenum, nor in the exocrine pancreas.

The protein resides in the cell membrane. It is found in the golgi apparatus. The protein localises to the trans-Golgi network membrane. Functionally, has been proposed to act as a receptor for neuronostatin, a peptide derived from the somatostatin/SST precursor. Involved in blood sugar regulation through the induction of glucagon in response to low glucose. The protein is Protein GPR107 (Gpr107) of Rattus norvegicus (Rat).